Here is a 173-residue protein sequence, read N- to C-terminus: Alpha-crystallin A chain (173 aa).

M1 is modified (N-acetylmethionine). Residues 1–63 are required for complex formation with BFSP1 and BFSP2; it reads MDIAIQHPWF…RTVLDSGISE (63 aa). Position 6 is a deamidated glutamine; partial (Q6). The residue at position 45 (S45) is a Phosphoserine. Q50 carries the deamidated glutamine; partial modification. Residues 52–162 enclose the sHSP domain; it reads LFRTVLDSGI…GHSERAIPVS (111 aa). The residue at position 70 (K70) is an N6-acetyllysine. Q90 is subject to Deamidated glutamine; partial. Residue K99 is modified to N6-acetyllysine. Zn(2+) is bound at residue H100. A Deamidated asparagine; partial modification is found at N101. Positions 102 and 107 each coordinate Zn(2+). At S122 the chain carries Phosphoserine. A Deamidated asparagine; partial modification is found at N123. A disordered region spans residues 144–173; the sequence is PKVPSGMDAGHSERAIPVSREEKPSSAPSS. The segment covering 153 to 167 has biased composition (basic and acidic residues); the sequence is GHSERAIPVSREEKP. Zn(2+) is bound at residue H154. S162 is a glycosylation site (O-linked (GlcNAc) serine).

It belongs to the small heat shock protein (HSP20) family. In terms of assembly, heteromer composed of three CRYAA and one CRYAB subunits. Inter-subunit bridging via zinc ions enhances stability, which is crucial as there is no protein turn over in the lens. Can also form homodimers and homotetramers (dimers of dimers) which serve as the building blocks of homooligomers. Within homooligomers, the zinc-binding motif is created from residues of 3 different molecules. His-100 and Glu-102 from one molecule are ligands of the zinc ion, and His-107 and His-154 residues from additional molecules complete the site with tetrahedral coordination geometry. Part of a complex required for lens intermediate filament formation composed of BFSP1, BFSP2 and CRYAA. Acetylation at Lys-70 may increase chaperone activity. In terms of processing, undergoes age-dependent proteolytical cleavage at the C-terminus.

The protein localises to the cytoplasm. The protein resides in the nucleus. Its function is as follows. Contributes to the transparency and refractive index of the lens. Acts as a chaperone, preventing aggregation of various proteins under a wide range of stress conditions. Required for the correct formation of lens intermediate filaments as part of a complex composed of BFSP1, BFSP2 and CRYAA. The polypeptide is Alpha-crystallin A chain (CRYAA) (Balaenoptera acutorostrata (Common minke whale)).